Reading from the N-terminus, the 572-residue chain is Dihydroxy-acid dehydratase (572 aa).

Cys57 contributes to the [2Fe-2S] cluster binding site. Position 89 (Asp89) interacts with Mg(2+). Cys130 contributes to the [2Fe-2S] cluster binding site. Mg(2+)-binding residues include Asp131 and Lys132. N6-carboxylysine is present on Lys132. Residue Cys202 coordinates [2Fe-2S] cluster. Position 453 (Glu453) interacts with Mg(2+). The Proton acceptor role is filled by Ser479.

Belongs to the IlvD/Edd family. In terms of assembly, homodimer. The cofactor is [2Fe-2S] cluster. Mg(2+) is required as a cofactor.

It catalyses the reaction (2R)-2,3-dihydroxy-3-methylbutanoate = 3-methyl-2-oxobutanoate + H2O. The enzyme catalyses (2R,3R)-2,3-dihydroxy-3-methylpentanoate = (S)-3-methyl-2-oxopentanoate + H2O. It functions in the pathway amino-acid biosynthesis; L-isoleucine biosynthesis; L-isoleucine from 2-oxobutanoate: step 3/4. Its pathway is amino-acid biosynthesis; L-valine biosynthesis; L-valine from pyruvate: step 3/4. In terms of biological role, functions in the biosynthesis of branched-chain amino acids. Catalyzes the dehydration of (2R,3R)-2,3-dihydroxy-3-methylpentanoate (2,3-dihydroxy-3-methylvalerate) into 2-oxo-3-methylpentanoate (2-oxo-3-methylvalerate) and of (2R)-2,3-dihydroxy-3-methylbutanoate (2,3-dihydroxyisovalerate) into 2-oxo-3-methylbutanoate (2-oxoisovalerate), the penultimate precursor to L-isoleucine and L-valine, respectively. This chain is Dihydroxy-acid dehydratase, found in Streptococcus thermophilus (strain CNRZ 1066).